Consider the following 139-residue polypeptide: Nucleoside diphosphate kinase (139 aa).

ATP contacts are provided by lysine 10, phenylalanine 58, arginine 86, threonine 92, arginine 103, and asparagine 113. Histidine 116 functions as the Pros-phosphohistidine intermediate in the catalytic mechanism.

This sequence belongs to the NDK family. Homotetramer. The cofactor is Mg(2+).

It is found in the cytoplasm. The enzyme catalyses a 2'-deoxyribonucleoside 5'-diphosphate + ATP = a 2'-deoxyribonucleoside 5'-triphosphate + ADP. It catalyses the reaction a ribonucleoside 5'-diphosphate + ATP = a ribonucleoside 5'-triphosphate + ADP. In terms of biological role, major role in the synthesis of nucleoside triphosphates other than ATP. The ATP gamma phosphate is transferred to the NDP beta phosphate via a ping-pong mechanism, using a phosphorylated active-site intermediate. The sequence is that of Nucleoside diphosphate kinase from Caulobacter sp. (strain K31).